A 67-amino-acid polypeptide reads, in one-letter code: Conotoxin AbVIM (67 aa).

A signal peptide spans Val-1–Thr-17. A propeptide spanning residues Ala-18–Ser-40 is cleaved from the precursor. Cystine bridges form between Cys-43/Cys-57, Cys-50/Cys-61, and Cys-56/Cys-66.

This sequence belongs to the conotoxin O1 superfamily. In terms of tissue distribution, expressed by the venom duct.

The protein localises to the secreted. The polypeptide is Conotoxin AbVIM (Conus abbreviatus (Abbreviated cone)).